The chain runs to 71 residues: uncharacterized protein (71 aa).

The disordered stretch occupies residues 1-20; it reads MQKLNKHLKKKKQKRKKMKK.

This is an uncharacterized protein from Methanocaldococcus jannaschii (strain ATCC 43067 / DSM 2661 / JAL-1 / JCM 10045 / NBRC 100440) (Methanococcus jannaschii).